Reading from the N-terminus, the 231-residue chain is Small ribosomal subunit protein uS3 (231 aa).

The region spanning 39–107 is the KH type-2 domain; it reads IRELLHKELK…DVVLNIVEIR (69 aa).

It belongs to the universal ribosomal protein uS3 family. In terms of assembly, part of the 30S ribosomal subunit. Forms a tight complex with proteins S10 and S14.

In terms of biological role, binds the lower part of the 30S subunit head. Binds mRNA in the 70S ribosome, positioning it for translation. This Nitrobacter winogradskyi (strain ATCC 25391 / DSM 10237 / CIP 104748 / NCIMB 11846 / Nb-255) protein is Small ribosomal subunit protein uS3.